A 247-amino-acid chain; its full sequence is tRNA pseudouridine synthase A (247 aa).

The Nucleophile role is filled by Asp52. Tyr110 contributes to the substrate binding site.

The protein belongs to the tRNA pseudouridine synthase TruA family. In terms of assembly, homodimer.

The enzyme catalyses uridine(38/39/40) in tRNA = pseudouridine(38/39/40) in tRNA. In terms of biological role, formation of pseudouridine at positions 38, 39 and 40 in the anticodon stem and loop of transfer RNAs. The chain is tRNA pseudouridine synthase A from Geobacter sp. (strain M21).